The following is a 142-amino-acid chain: Large ribosomal subunit protein uL16 (142 aa).

This sequence belongs to the universal ribosomal protein uL16 family. In terms of assembly, part of the 50S ribosomal subunit.

Binds 23S rRNA and is also seen to make contacts with the A and possibly P site tRNAs. The chain is Large ribosomal subunit protein uL16 from Thermotoga sp. (strain RQ2).